A 453-amino-acid polypeptide reads, in one-letter code: Ribosomal protein uS12 methylthiotransferase RimO (453 aa).

Positions Pro-6–Pro-116 constitute an MTTase N-terminal domain. Positions 15, 51, 80, 147, 151, and 154 each coordinate [4Fe-4S] cluster. A Radical SAM core domain is found at Leu-133–Ala-370. Positions Glu-373–Pro-441 constitute a TRAM domain.

This sequence belongs to the methylthiotransferase family. RimO subfamily. The cofactor is [4Fe-4S] cluster.

It localises to the cytoplasm. The enzyme catalyses L-aspartate(89)-[ribosomal protein uS12]-hydrogen + (sulfur carrier)-SH + AH2 + 2 S-adenosyl-L-methionine = 3-methylsulfanyl-L-aspartate(89)-[ribosomal protein uS12]-hydrogen + (sulfur carrier)-H + 5'-deoxyadenosine + L-methionine + A + S-adenosyl-L-homocysteine + 2 H(+). Its function is as follows. Catalyzes the methylthiolation of an aspartic acid residue of ribosomal protein uS12. The polypeptide is Ribosomal protein uS12 methylthiotransferase RimO (Stenotrophomonas maltophilia (strain K279a)).